A 392-amino-acid polypeptide reads, in one-letter code: Sugar efflux transporter A (392 aa).

Over 1 to 10 (MIWIMTMARR) the chain is Cytoplasmic. The chain crosses the membrane as a helical span at residues 11 to 31 (MNGVYAAFMLVAFMMGVAGAL). The Periplasmic portion of the chain corresponds to 32-48 (QAPTLSLFLSREVGAQP). The chain crosses the membrane as a helical span at residues 49 to 69 (FWIGLFYTVNAIAGIGVSLWL). The Cytoplasmic segment spans residues 70-81 (AKRSDSQGDRRK). A helical transmembrane segment spans residues 82 to 102 (LIIFCCLMAIGNALLFAFNRH). At 103 to 106 (YLTL) the chain is on the periplasmic side. The helical transmembrane segment at 107 to 127 (ITCGVLLASLANTAMPQLFAL) threads the bilayer. The Cytoplasmic portion of the chain corresponds to 128 to 149 (AREYADNSAREVVMFSSVMRAQ). Residues 150-170 (LSLAWVIGPPLAFMLALNYGF) form a helical membrane-spanning segment. Position 171 (Thr-171) is a topological domain, periplasmic. Residues 172–192 (VMFSIAAGIFTLSLVLIAFML) form a helical membrane-spanning segment. Residues 193 to 219 (PSVARVELPSENALSMQGGWQDSNVRM) lie on the Cytoplasmic side of the membrane. A helical transmembrane segment spans residues 220-240 (LFVASTLMWTCNTMYIIDMPL). The Periplasmic portion of the chain corresponds to 241–251 (WISSELGLPDK). A helical membrane pass occupies residues 252-272 (LAGFLMGTAAGLEIPAMILAG). Residues 273–282 (YYVKRYGKRR) are Cytoplasmic-facing. Residues 283-303 (MMVIAVAAGVLFYTGLIFFNS) traverse the membrane as a helical segment. Topologically, residues 304 to 308 (RMALM) are periplasmic. Residues 309–329 (TLQLFNAVFIGIVAGIGMLWF) traverse the membrane as a helical segment. Residues 330–342 (QDLMPGRAGAATT) lie on the Cytoplasmic side of the membrane. A helical transmembrane segment spans residues 343–363 (LFTNSISTGVILAGVIQGAIA). At 364 to 365 (QS) the chain is on the periplasmic side. Residues 366 to 386 (WGHFAVYWVIAVISVVALFLT) traverse the membrane as a helical segment. Residues 387–392 (AKVKDV) are Cytoplasmic-facing.

This sequence belongs to the major facilitator superfamily. Set transporter family.

The protein resides in the cell inner membrane. Functionally, involved in the efflux of sugars. The physiological role may be the detoxification of non-metabolizable sugar analogs. Can transport IPTG, lactose and glucose. Has broad substrate specificity, with preferences for glucosides or galactosides with alkyl or aryl substituents. The sequence is that of Sugar efflux transporter A (setA) from Escherichia coli (strain K12).